Consider the following 393-residue polypeptide: Cytochrome b (393 aa).

The next 4 membrane-spanning stretches (helical) occupy residues 38–58 (FGSL…FLAM), 82–104 (WLLR…LHIF), 119–139 (VWCL…IGYV), and 185–205 (FFSL…LHLA). Heme b contacts are provided by histidine 88 and histidine 102. Positions 189 and 203 each coordinate heme b. Histidine 208 serves as a coordination point for a ubiquinone. 4 helical membrane passes run 231–251 (FYVK…IWIF), 295–315 (VGGV…PFFK), 327–347 (IYQG…WIGC), and 354–373 (FVTI…AITP).

This sequence belongs to the cytochrome b family. In terms of assembly, the main subunits of complex b-c1 are: cytochrome b, cytochrome c1 and the Rieske protein. It depends on heme b as a cofactor. Post-translationally, first mitochondrial-encoded protein to be shown to have its N-terminal methionine cleaved off.

It is found in the mitochondrion inner membrane. In terms of biological role, component of the ubiquinol-cytochrome c reductase complex (complex III or cytochrome b-c1 complex) that is part of the mitochondrial respiratory chain. The b-c1 complex mediates electron transfer from ubiquinol to cytochrome c. Contributes to the generation of a proton gradient across the mitochondrial membrane that is then used for ATP synthesis. In Solanum tuberosum (Potato), this protein is Cytochrome b (MT-CYB).